The following is a 261-amino-acid chain: MDFERKPLIGMVHLKPLPGSYLYNGDFDSVIEAALRDAVTLEEAGFDAVMVENFGDVPFPKYADKTTVASLAVVAKAIRDEVSLPLGVNVLRNDGIAAYSIAYAVKADFIRVNVLSGVAYTDQGIIEGIAHELAMLRKRLPSEIKVFADVHVKHAVHFGDFEDAFLDTVERGLADAVVVSGKATGRPVDVDKLALAKEISPVPVIVGSGTSYDNLPELWKYADGFIVGTWIKRDGRVENEVSLERARKLVELAKELRQSSI.

It belongs to the BtpA family.

This is an uncharacterized protein from Thermococcus kodakarensis (strain ATCC BAA-918 / JCM 12380 / KOD1) (Pyrococcus kodakaraensis (strain KOD1)).